We begin with the raw amino-acid sequence, 670 residues long: Sodium/potassium/calcium exchanger 2 (670 aa).

Residues 1 to 38 lie on the Cytoplasmic side of the membrane; sequence MDLHQSATVRLLQEWCSHESPSGCRRHYNTRKKLKLIR. A helical transmembrane segment spans residues 39–59; the sequence is VIGLVMGLVAVSTVPFSISAF. The Extracellular portion of the chain corresponds to 60 to 133; that stretch reads TETYSQNNRG…DVFSLEERRK (74 aa). Disordered stretches follow at residues 67–86 and 91–122; these read NRGE…HRQR and LNDK…GDYP. Positions 106 to 122 are enriched in basic and acidic residues; it reads QEDRSENGTDHAQGDYP. N112 is a glycosylation site (N-linked (GlcNAc...) asparagine). A helical membrane pass occupies residues 134–154; it reads GAIILHVIGMIYMFIALAIVC. The Cytoplasmic segment spans residues 155-179; the sequence is DEFFVPSLTVITEKLGISDDVAGAT. The stretch at 175–215 is one Alpha-1 repeat; the sequence is VAGATFMAAGGSAPELFTSLIGVFIAHSNVGIGTIVGSAVF. The helical transmembrane segment at 180–200 threads the bilayer; sequence FMAAGGSAPELFTSLIGVFIA. The Extracellular segment spans residues 201–205; that stretch reads HSNVG. Residues 206 to 226 form a helical membrane-spanning segment; that stretch reads IGTIVGSAVFNILFVIGMCAL. The Cytoplasmic segment spans residues 227-244; it reads FSREILNLTWWPLFRDVS. Residues 245-265 traverse the membrane as a helical segment; that stretch reads FYIVDLIMLIIFFLDNVIMWW. Residue E266 is a topological domain, extracellular. Residues 267 to 287 traverse the membrane as a helical segment; sequence SLLLLTAYFAYVVFMKFNVQV. The Cytoplasmic portion of the chain corresponds to 288–506; it reads ERWVKQMINR…PDVRKPASKK (219 aa). A disordered region spans residues 312–335; it reads ASTAGDKEEPTLPNKPRLQRGGSS. S337 and S341 each carry phosphoserine. Disordered regions lie at residues 394-414 and 450-471; these read KCQV…DYAA and AADA…LSLS. A helical transmembrane segment spans residues 507 to 527; that stretch reads FFPITFFGSITWIAVFSYLMV. The Extracellular portion of the chain corresponds to 528-542; it reads WWAHQVGETIGISEE. A helical membrane pass occupies residues 543-563; the sequence is IMGLTILAAGTSIPDLITSVI. The stretch at 550–581 is one Alpha-2 repeat; sequence AAGTSIPDLITSVIVARKGLGDMAVSSSVGSN. The Cytoplasmic segment spans residues 564-578; that stretch reads VARKGLGDMAVSSSV. A helical membrane pass occupies residues 579 to 599; that stretch reads GSNIFDITVGLPLPWLLYTII. Residues 600–611 are Extracellular-facing; it reads HRFKPVTVSSNG. The helical transmembrane segment at 612–632 threads the bilayer; that stretch reads LFCAIVLLFIMLIFVILSIAL. The Cytoplasmic portion of the chain corresponds to 633–639; that stretch reads CKWRMNK. Residues 640 to 660 traverse the membrane as a helical segment; it reads ILGFIMFGLYFAFLVVSVLLE. At 661-670 the chain is on the extracellular side; sequence DKVLECPVSI.

Belongs to the Ca(2+):cation antiporter (CaCA) (TC 2.A.19) family. SLC24A subfamily. In terms of tissue distribution, expressed abundantly in all regions of the brain and weakly in the eye, large intestine and adrenal tissue.

The protein localises to the cell membrane. It catalyses the reaction Ca(2+)(out) + K(+)(out) + 4 Na(+)(in) = Ca(2+)(in) + K(+)(in) + 4 Na(+)(out). Its function is as follows. Calcium, potassium:sodium antiporter that transports 1 Ca(2+) and 1 K(+) in exchange for 4 Na(+). Required for learming and memory by regulating neuronal Ca(2+), which is essential for the development of synaptic plasticity. The chain is Sodium/potassium/calcium exchanger 2 (Slc24a2) from Rattus norvegicus (Rat).